The following is a 389-amino-acid chain: 1-deoxy-D-xylulose 5-phosphate reductoisomerase (389 aa).

NADPH contacts are provided by Ser-11, Gly-12, Ser-13, Val-14, Asn-39, and Asn-122. 1-deoxy-D-xylulose 5-phosphate is bound at residue Lys-123. NADPH is bound at residue Glu-124. Residue Asp-148 participates in Mn(2+) binding. 4 residues coordinate 1-deoxy-D-xylulose 5-phosphate: Ser-149, Glu-150, Ser-174, and His-197. Glu-150 contacts Mn(2+). Gly-203 is a binding site for NADPH. Positions 210, 215, 216, and 219 each coordinate 1-deoxy-D-xylulose 5-phosphate. Glu-219 is a Mn(2+) binding site.

It belongs to the DXR family. Mg(2+) serves as cofactor. The cofactor is Mn(2+).

The enzyme catalyses 2-C-methyl-D-erythritol 4-phosphate + NADP(+) = 1-deoxy-D-xylulose 5-phosphate + NADPH + H(+). Its pathway is isoprenoid biosynthesis; isopentenyl diphosphate biosynthesis via DXP pathway; isopentenyl diphosphate from 1-deoxy-D-xylulose 5-phosphate: step 1/6. Its function is as follows. Catalyzes the NADPH-dependent rearrangement and reduction of 1-deoxy-D-xylulose-5-phosphate (DXP) to 2-C-methyl-D-erythritol 4-phosphate (MEP). This chain is 1-deoxy-D-xylulose 5-phosphate reductoisomerase, found in Leptospira interrogans serogroup Icterohaemorrhagiae serovar copenhageni (strain Fiocruz L1-130).